Here is a 145-residue protein sequence, read N- to C-terminus: Deoxyuridine 5'-triphosphate nucleotidohydrolase (145 aa).

Residues 62 to 64 (RSG), N75, 79 to 81 (TVD), and K89 each bind substrate.

This sequence belongs to the dUTPase family. Mg(2+) serves as cofactor.

It carries out the reaction dUTP + H2O = dUMP + diphosphate + H(+). It participates in pyrimidine metabolism; dUMP biosynthesis; dUMP from dCTP (dUTP route): step 2/2. This enzyme is involved in nucleotide metabolism: it produces dUMP, the immediate precursor of thymidine nucleotides and it decreases the intracellular concentration of dUTP so that uracil cannot be incorporated into DNA. The polypeptide is Deoxyuridine 5'-triphosphate nucleotidohydrolase (Helicobacter pylori (strain J99 / ATCC 700824) (Campylobacter pylori J99)).